A 262-amino-acid chain; its full sequence is Ribosomal RNA small subunit methyltransferase A (262 aa).

N20, L22, G47, E68, D90, and N110 together coordinate S-adenosyl-L-methionine.

This sequence belongs to the class I-like SAM-binding methyltransferase superfamily. rRNA adenine N(6)-methyltransferase family. RsmA subfamily.

The protein localises to the cytoplasm. It catalyses the reaction adenosine(1518)/adenosine(1519) in 16S rRNA + 4 S-adenosyl-L-methionine = N(6)-dimethyladenosine(1518)/N(6)-dimethyladenosine(1519) in 16S rRNA + 4 S-adenosyl-L-homocysteine + 4 H(+). In terms of biological role, specifically dimethylates two adjacent adenosines (A1518 and A1519) in the loop of a conserved hairpin near the 3'-end of 16S rRNA in the 30S particle. May play a critical role in biogenesis of 30S subunits. This is Ribosomal RNA small subunit methyltransferase A from Chlorobium phaeobacteroides (strain BS1).